The primary structure comprises 271 residues: MGQLLKKPKTKVLKQGVTLVHDTEAEKAPLKYVSFKLVDIQANAIYEETLGSYECCIVVVRGTVTVTDGEHVFSNIGTRSSVFERKPTDSVYLSNGRSFTVTGTSEACIALCYAPSNKQLPTKLIKASDVGIENRGQLQNKRLVHNILPDSDKTANSLLVVEVFTESGNWSSYPPHKHDEDNLPYESFLEETYYHEIDPPQGFVFQRVYTESRNIDETMAVENGDVVIVPAGYHPVGVPDGYASYYLNVMAGPVRIWKFRNEKDHEWILSR.

The protein belongs to the isomerase IolB family.

It carries out the reaction 5-deoxy-D-glucuronate = 5-dehydro-2-deoxy-D-gluconate. It participates in polyol metabolism; myo-inositol degradation into acetyl-CoA; acetyl-CoA from myo-inositol: step 4/7. Functionally, involved in the isomerization of 5-deoxy-glucuronate (5DG) to 5-dehydro-2-deoxy-D-gluconate (DKG or 2-deoxy-5-keto-D-gluconate). The protein is 5-deoxy-glucuronate isomerase of Shouchella clausii (strain KSM-K16) (Alkalihalobacillus clausii).